Here is a 156-residue protein sequence, read N- to C-terminus: Arginine repressor (156 aa).

The protein belongs to the ArgR family.

The protein resides in the cytoplasm. It participates in amino-acid biosynthesis; L-arginine biosynthesis [regulation]. Its function is as follows. Regulates arginine biosynthesis genes. The chain is Arginine repressor from Klebsiella pneumoniae (strain 342).